We begin with the raw amino-acid sequence, 140 residues long: Putative peptidyl-tRNA hydrolase PTRHD1 (140 aa).

The protein belongs to the PTH2 family. PTRHD1 subfamily.

The enzyme catalyses an N-acyl-L-alpha-aminoacyl-tRNA + H2O = an N-acyl-L-amino acid + a tRNA + H(+). Functionally, as a putative peptidyl-tRNA hydrolase, it might be involved in releasing tRNAs from the ribosome during protein synthesis. Some evidence, however, suggests that it lacks peptidyl-tRNA hydrolase activity. The chain is Putative peptidyl-tRNA hydrolase PTRHD1 (Ptrhd1) from Mus musculus (Mouse).